The sequence spans 394 residues: Venom metalloproteinase antarease TserMP_A (394 aa).

The N-terminal stretch at 1-16 (MISYLASIFLLATVSA) is a signal peptide. Residues 17-157 (VPSGRVEVVF…NAENVSRMAR (141 aa)) constitute a propeptide that is removed on maturation. The 230-residue stretch at 162-391 (IVVEYYIVTD…PTASCIFQQC (230 aa)) folds into the Peptidase M12B domain. The cysteines at positions 295 and 386 are disulfide-linked. Residue H319 participates in Zn(2+) binding. The active site involves E320. Zn(2+) contacts are provided by H323 and H329.

Requires Zn(2+) as cofactor. Post-translationally, contains 4 disulfide bonds. In terms of tissue distribution, expressed by the venom gland.

It localises to the secreted. Inhibited by EDTA. Functionally, acts as a metalloprotease. Penetrates intact tissue and specifically cleaves the vesicle-associated membrane protein 2 (VAMP2) (part of the SNARE complex) involved in pancreatic secretion, thus disrupting the normal vesicular traffic. The sequence is that of Venom metalloproteinase antarease TserMP_A from Tityus serrulatus (Brazilian scorpion).